The following is a 70-amino-acid chain: Large ribosomal subunit protein bL31 (70 aa).

Belongs to the bacterial ribosomal protein bL31 family. Type A subfamily. As to quaternary structure, part of the 50S ribosomal subunit.

In terms of biological role, binds the 23S rRNA. This Chlorobium chlorochromatii (strain CaD3) protein is Large ribosomal subunit protein bL31.